Consider the following 1129-residue polypeptide: Serine/threonine-protein kinase 11-interacting protein (1129 aa).

8 LRR repeats span residues 107-128 (SLRS…RSVY), 130-150 (QLEV…IALC), 162-183 (VLHT…LELL), 185-206 (SLKI…LKVL), 208-229 (ELQY…SVGN), 232-253 (KLHS…ENLP), 254-275 (NLQH…SGLA), and 279-300 (NLKQ…RALT). Disordered regions lie at residues 335-392 (RLQP…RRGQ), 428-475 (DPEY…HVAP), 654-678 (GDIY…NHTG), and 696-724 (NPTG…GLAA). Polar residues predominate over residues 337–355 (QPSSSATESSCTGDLTDSY). Residues 365-374 (LPRKKSRVKV) show a composition bias toward basic residues. Basic and acidic residues predominate over residues 381–391 (ERSDSEYERRG). Residues 436–447 (HSPPPRASPSPT) are compositionally biased toward pro residues. The span at 448–458 (APSSVPKQKSP) shows a compositional bias: low complexity.

This sequence belongs to the STK11IP family.

The protein resides in the cytoplasm. In Xenopus tropicalis (Western clawed frog), this protein is Serine/threonine-protein kinase 11-interacting protein (stk11ip).